Consider the following 308-residue polypeptide: Glutaminase (308 aa).

Residues Ser-66, Asn-117, Glu-161, Asn-168, Tyr-192, Tyr-244, and Val-262 each coordinate substrate.

The protein belongs to the glutaminase family. Homotetramer.

It carries out the reaction L-glutamine + H2O = L-glutamate + NH4(+). This is Glutaminase from Enterobacter sp. (strain 638).